We begin with the raw amino-acid sequence, 576 residues long: Low-affinity glucose transporter HXT4 (576 aa).

The disordered stretch occupies residues methionine 1–asparagine 56. At methionine 1–serine 66 the chain is on the cytoplasmic side. Over residues glutamate 25 to asparagine 37 the composition is skewed to polar residues. Positions lysine 38–serine 54 are enriched in basic and acidic residues. Lysine 45 is covalently cross-linked (Glycyl lysine isopeptide (Lys-Gly) (interchain with G-Cter in ubiquitin)). A helical transmembrane segment spans residues alanine 67–tryptophan 87. Topologically, residues aspartate 88–glycine 122 are extracellular. A helical transmembrane segment spans residues leucine 123–glycine 143. Residues aspartate 144–lysine 149 are Cytoplasmic-facing. A helical membrane pass occupies residues methionine 150–isoleucine 170. Over asparagine 171 to arginine 180 the chain is Extracellular. The chain crosses the membrane as a helical span at residues isoleucine 181–valine 201. Over serine 202–arginine 207 the chain is Cytoplasmic. A helical transmembrane segment spans residues glycine 208 to threonine 228. Over asparagine 229–arginine 242 the chain is Extracellular. The chain crosses the membrane as a helical span at residues valine 243 to proline 263. The Cytoplasmic portion of the chain corresponds to glutamate 264–aspartate 346. A helical membrane pass occupies residues asparagine 347–serine 363. Residues aspartate 364 to serine 369 are Extracellular-facing. A helical transmembrane segment spans residues isoleucine 370–valine 387. The Cytoplasmic portion of the chain corresponds to glutamate 388–arginine 394. The helical transmembrane segment at cysteine 395–valine 415 threads the bilayer. Topologically, residues threonine 416 to valine 437 are extracellular. A glycan (N-linked (GlcNAc...) asparagine) is linked at asparagine 425. The helical transmembrane segment at phenylalanine 438–asparagine 458 threads the bilayer. Topologically, residues serine 459–glutamine 475 are cytoplasmic. A helical transmembrane segment spans residues alanine 476–isoleucine 496. Aspartate 497 is a topological domain (extracellular). A helical membrane pass occupies residues phenylalanine 498–phenylalanine 518. The Cytoplasmic segment spans residues valine 519–lysine 576.

It belongs to the major facilitator superfamily. Sugar transporter (TC 2.A.1.1) family.

The protein resides in the cell membrane. Its activity is regulated as follows. Xylose uptake is strongly inhibited by glucose. Low-affinity glucose transporter. Can also transport xylose. The protein is Low-affinity glucose transporter HXT4 (HXT4) of Saccharomyces cerevisiae (strain JAY291) (Baker's yeast).